A 557-amino-acid chain; its full sequence is Potassium-transporting ATPase potassium-binding subunit (557 aa).

12 consecutive transmembrane segments (helical) span residues 5–25, 63–83, 132–152, 170–190, 253–273, 283–303, 329–349, 356–376, 379–399, 416–436, 484–504, and 526–546; these read GFLL…PLGS, LCAI…MLLG, GLTV…FALI, LLRI…LFFI, FVQM…FGEV, LLWA…WAEV, VLVS…AVIA, ALGG…FGGV, GLYG…LMIG, LTAL…ALAM, LLAF…MAIA, and LFVG…FIPA.

It belongs to the KdpA family. The system is composed of three essential subunits: KdpA, KdpB and KdpC.

The protein resides in the cell inner membrane. Its function is as follows. Part of the high-affinity ATP-driven potassium transport (or Kdp) system, which catalyzes the hydrolysis of ATP coupled with the electrogenic transport of potassium into the cytoplasm. This subunit binds the periplasmic potassium ions and delivers the ions to the membrane domain of KdpB through an intramembrane tunnel. This chain is Potassium-transporting ATPase potassium-binding subunit, found in Escherichia coli O17:K52:H18 (strain UMN026 / ExPEC).